Reading from the N-terminus, the 1576-residue chain is Disco-interacting protein 2 homolog B (1576 aa).

Residues Ser-9, Ser-50, and Ser-53 each carry the phosphoserine modification. Residues 12 to 131 enclose the DMAP1-binding domain; it reads AVAALPPEVR…PMPTKRRSTF (120 aa). The interval 31-167 is disordered; that stretch reads LSEGDITQKG…AALSAALQQS (137 aa). Positions 52 to 62 are enriched in polar residues; sequence YSPQTQETDSA. The span at 70–83 shows a compositional bias: low complexity; that stretch reads QTPAPSAAQTSAPS. Thr-71 carries the phosphothreonine modification. Over residues 92-104 the composition is skewed to basic and acidic residues; that stretch reads GARDERYRSDIHT. Ser-100 carries the phosphoserine modification. A Phosphothreonine modification is found at Thr-140. Residues Ser-146, Ser-148, and Ser-153 each carry the phosphoserine modification. Positions 155–167 are enriched in low complexity; it reads RRQAALSAALQQS. Phosphoserine occurs at positions 178, 193, and 203. Residues 179–201 form a disordered region; sequence IQGSSTSSSASSTLSHGEVKGTS. Over residues 182–193 the composition is skewed to low complexity; sequence SSTSSSASSTLS. Residues 217–246 are disordered; it reads SAPPDVTTTTSSSSSSSSIRPANIDLPPSG. A compositionally biased stretch (low complexity) spans 223–234; sequence TTTTSSSSSSSS. The residue at position 259 (Ser-259) is a Phosphoserine.

This sequence belongs to the DIP2 family. Interacts with alpha-tubulin. Moderately expressed in adult brain, placenta, skeletal muscle, heart, kidney, pancreas, lung, spleen and colon. Expression was weaker in adult liver, kidney, spleen, and ovary, and in fetal brain and liver. In the brain, it is expressed in the cerebral cortex; the frontal, parietal, occipital and temporal lobes; the paracentral gyrus; the pons; the corpus callosum and the hippocampus. Highest expression levels in the brain were found in the cerebral cortex and the frontal and parietal lobes.

The protein localises to the cell projection. Its subcellular location is the dendrite. It localises to the axon. The protein resides in the perikaryon. Functionally, negatively regulates axonal outgrowth and is essential for normal synaptic transmission. Not required for regulation of axon polarity. Promotes acetylation of alpha-tubulin. The chain is Disco-interacting protein 2 homolog B (DIP2B) from Homo sapiens (Human).